Reading from the N-terminus, the 87-residue chain is Small ribosomal subunit protein bS20 (87 aa).

The segment at 1-21 is disordered; it reads MANHKSAEKRARQTIKKTERN.

This sequence belongs to the bacterial ribosomal protein bS20 family.

Binds directly to 16S ribosomal RNA. This chain is Small ribosomal subunit protein bS20, found in Campylobacter jejuni subsp. jejuni serotype O:23/36 (strain 81-176).